The following is a 181-amino-acid chain: Probable cobalt-precorrin-6B C(15)-methyltransferase (decarboxylating) (181 aa).

S-adenosyl-L-methionine is bound by residues Thr16, 40 to 44 (GCGSG), Asp61, and Ala89.

Belongs to the methyltransferase superfamily. Archaeal-type CbiT family.

It catalyses the reaction Co-precorrin-6B + S-adenosyl-L-methionine = Co-precorrin-7 + S-adenosyl-L-homocysteine + CO2. It functions in the pathway cofactor biosynthesis; adenosylcobalamin biosynthesis; cob(II)yrinate a,c-diamide from sirohydrochlorin (anaerobic route): step 8/10. Functionally, catalyzes the methylation of C-15 in cobalt-precorrin-6B followed by the decarboxylation of C-12 to form cobalt-precorrin-7. This chain is Probable cobalt-precorrin-6B C(15)-methyltransferase (decarboxylating), found in Methanococcus maripaludis (strain C6 / ATCC BAA-1332).